A 252-amino-acid polypeptide reads, in one-letter code: Protein BTG3 (252 aa).

Residues 138–162 (VTSDYHSGSSSSDEDTSKEVEVKPS) form a disordered region.

This sequence belongs to the BTG family. In terms of tissue distribution, highly expressed in the brain.

In terms of biological role, overexpression impairs serum-induced cell cycle progression from the G0/G1 to S phase. This chain is Protein BTG3, found in Rattus norvegicus (Rat).